A 459-amino-acid chain; its full sequence is Ribulose bisphosphate carboxylase large chain (459 aa).

The residue at position 4 (Lys4) is an N6,N6,N6-trimethyllysine. Asn113 and Thr163 together coordinate substrate. Residue Lys165 is the Proton acceptor of the active site. Lys167 is a substrate binding site. Lys191, Asp193, and Glu194 together coordinate Mg(2+). At Lys191 the chain carries N6-carboxylysine. His284 serves as the catalytic Proton acceptor. Residues Arg285, His317, and Ser369 each coordinate substrate.

The protein belongs to the RuBisCO large chain family. Type I subfamily. Heterohexadecamer of 8 large chains and 8 small chains; disulfide-linked. The disulfide link is formed within the large subunit homodimers. Requires Mg(2+) as cofactor. In terms of processing, the disulfide bond which can form in the large chain dimeric partners within the hexadecamer appears to be associated with oxidative stress and protein turnover.

The protein resides in the plastid. The protein localises to the chloroplast. The catalysed reaction is 2 (2R)-3-phosphoglycerate + 2 H(+) = D-ribulose 1,5-bisphosphate + CO2 + H2O. It carries out the reaction D-ribulose 1,5-bisphosphate + O2 = 2-phosphoglycolate + (2R)-3-phosphoglycerate + 2 H(+). In terms of biological role, ruBisCO catalyzes two reactions: the carboxylation of D-ribulose 1,5-bisphosphate, the primary event in carbon dioxide fixation, as well as the oxidative fragmentation of the pentose substrate in the photorespiration process. Both reactions occur simultaneously and in competition at the same active site. The sequence is that of Ribulose bisphosphate carboxylase large chain from Micranthes integrifolia (Wholeleaf saxifrage).